We begin with the raw amino-acid sequence, 257 residues long: Acetylglutamate kinase (257 aa).

Substrate is bound by residues 43–44, Arg65, and Asn157; that span reads GG. ATP is bound by residues 180 to 185 and 208 to 210; these read DVSGIL and IIT.

Belongs to the acetylglutamate kinase family. ArgB subfamily. In terms of assembly, homodimer.

The protein localises to the cytoplasm. The catalysed reaction is N-acetyl-L-glutamate + ATP = N-acetyl-L-glutamyl 5-phosphate + ADP. It functions in the pathway amino-acid biosynthesis; L-arginine biosynthesis; N(2)-acetyl-L-ornithine from L-glutamate: step 2/4. Functionally, catalyzes the ATP-dependent phosphorylation of N-acetyl-L-glutamate. The sequence is that of Acetylglutamate kinase from Salmonella paratyphi B (strain ATCC BAA-1250 / SPB7).